We begin with the raw amino-acid sequence, 445 residues long: Probable aminotransferase TAT3 (445 aa).

This sequence belongs to the class-I pyridoxal-phosphate-dependent aminotransferase family. The cofactor is pyridoxal 5'-phosphate. Expressed in roots, leaves and cauline leaves.

This is Probable aminotransferase TAT3 (TAT3) from Arabidopsis thaliana (Mouse-ear cress).